Consider the following 328-residue polypeptide: tRNA dimethylallyltransferase (328 aa).

25–32 (GNTGSGKS) is a binding site for ATP. Substrate is bound at residue 27–32 (TGSGKS). The interaction with substrate tRNA stretch occupies residues 50–53 (DSRQ).

This sequence belongs to the IPP transferase family. In terms of assembly, monomer. Mg(2+) serves as cofactor.

The catalysed reaction is adenosine(37) in tRNA + dimethylallyl diphosphate = N(6)-dimethylallyladenosine(37) in tRNA + diphosphate. Catalyzes the transfer of a dimethylallyl group onto the adenine at position 37 in tRNAs that read codons beginning with uridine, leading to the formation of N6-(dimethylallyl)adenosine (i(6)A). This is tRNA dimethylallyltransferase from Dehalococcoides mccartyi (strain ATCC BAA-2100 / JCM 16839 / KCTC 5957 / BAV1).